The chain runs to 486 residues: Glutamyl-tRNA(Gln) amidotransferase subunit A (486 aa).

Residues Lys76 and Ser151 each act as charge relay system in the active site. Ser175 acts as the Acyl-ester intermediate in catalysis.

This sequence belongs to the amidase family. GatA subfamily. In terms of assembly, heterotrimer of A, B and C subunits.

It carries out the reaction L-glutamyl-tRNA(Gln) + L-glutamine + ATP + H2O = L-glutaminyl-tRNA(Gln) + L-glutamate + ADP + phosphate + H(+). Functionally, allows the formation of correctly charged Gln-tRNA(Gln) through the transamidation of misacylated Glu-tRNA(Gln) in organisms which lack glutaminyl-tRNA synthetase. The reaction takes place in the presence of glutamine and ATP through an activated gamma-phospho-Glu-tRNA(Gln). The chain is Glutamyl-tRNA(Gln) amidotransferase subunit A from Nitrosomonas europaea (strain ATCC 19718 / CIP 103999 / KCTC 2705 / NBRC 14298).